The chain runs to 355 residues: Peptide chain release factor 1 (355 aa).

An N5-methylglutamine modification is found at Q231.

Belongs to the prokaryotic/mitochondrial release factor family. Methylated by PrmC. Methylation increases the termination efficiency of RF1.

It is found in the cytoplasm. Its function is as follows. Peptide chain release factor 1 directs the termination of translation in response to the peptide chain termination codons UAG and UAA. The sequence is that of Peptide chain release factor 1 from Nautilia profundicola (strain ATCC BAA-1463 / DSM 18972 / AmH).